Consider the following 752-residue polypeptide: Xanthine dehydrogenase molybdenum-binding subunit (752 aa).

4 residues coordinate Mo-molybdopterin: glutamine 206, phenylalanine 237, arginine 350, and alanine 516.

The protein belongs to the xanthine dehydrogenase family. In terms of assembly, heterotrimer of XdhA, XdhB and XdhC. Mo-molybdopterin is required as a cofactor.

The catalysed reaction is xanthine + NAD(+) + H2O = urate + NADH + H(+). The enzyme catalyses hypoxanthine + NAD(+) + H2O = xanthine + NADH + H(+). It participates in purine metabolism; hypoxanthine degradation; urate from hypoxanthine: step 1/2. The protein operates within purine metabolism; hypoxanthine degradation; urate from hypoxanthine: step 2/2. Its function is as follows. Presumed to be a dehydrogenase, but possibly an oxidase. Participates in limited purine salvage (requires aspartate) but does not support aerobic growth on purines as the sole carbon source (purine catabolism). This chain is Xanthine dehydrogenase molybdenum-binding subunit (xdhA), found in Escherichia coli O157:H7.